A 246-amino-acid chain; its full sequence is Carboxy-S-adenosyl-L-methionine synthase (246 aa).

Residues Tyr-39, 64 to 66, 89 to 90, 117 to 118, Asn-132, and Arg-199 contribute to the S-adenosyl-L-methionine site; these read GCS, DN, and DI.

It belongs to the class I-like SAM-binding methyltransferase superfamily. Cx-SAM synthase family. Homodimer.

The enzyme catalyses prephenate + S-adenosyl-L-methionine = carboxy-S-adenosyl-L-methionine + 3-phenylpyruvate + H2O. Its function is as follows. Catalyzes the conversion of S-adenosyl-L-methionine (SAM) to carboxy-S-adenosyl-L-methionine (Cx-SAM). In Enterobacter sp. (strain 638), this protein is Carboxy-S-adenosyl-L-methionine synthase.